Consider the following 510-residue polypeptide: Protein PLASTID TRANSCRIPTIONALLY ACTIVE 16, chloroplastic (510 aa).

Over residues 1 to 14 the composition is skewed to polar residues; it reads MASSSTSFPLTTAP. The N-terminal 19 residues, 1-19, are a transit peptide targeting the chloroplast; the sequence is MASSSTSFPLTTAPPQGVR. Disordered stretches follow at residues 1-24 and 38-58; these read MASS…NRRK and LGKT…NPFQ. The span at 41–51 shows a compositional bias: basic and acidic residues; the sequence is TKGDDDSEGKQ. 94–123 lines the NADP(+) pocket; sequence IFVAGATGQAGIRIAQTLLQRGFSVRAGVP. Residues 354–403 are a coiled coil; it reads ARERAEEEAKVAADKAREAAEAAKEFEKQMQKLSEKEAEAASLAEDAQQK. The residue at position 395 (Ser395) is a Phosphoserine. Position 451 is a phosphothreonine; by STN7 (Thr451). Positions 453–493 are disordered; that stretch reads RGQAKARNLPPKKAVVKQRPSSPFASKPKEERPKKPEKEVR. The segment covering 479 to 493 has biased composition (basic and acidic residues); that stretch reads KPKEERPKKPEKEVR.

This sequence belongs to the NAD(P)-dependent epimerase/dehydratase family. Component of the plastid transcriptionally active chromosome required for plastid gene expression. Interacts with DEGP1 under high light conditions and maybe its degradation target. In terms of processing, excluded from chloroplast nucleoid when phosphorylated on Thr-451 by STN7 that may regulate membrane-anchoring functions of the nucleoid.

The protein localises to the plastid. Its subcellular location is the chloroplast stroma. The protein resides in the chloroplast nucleoid. It is found in the chloroplast thylakoid membrane. Probably involved in the regulation of plastid gene expression. The polypeptide is Protein PLASTID TRANSCRIPTIONALLY ACTIVE 16, chloroplastic (Arabidopsis thaliana (Mouse-ear cress)).